The sequence spans 227 residues: PKHD-type hydroxylase Mnod_1077 (227 aa).

The 101-residue stretch at 78–178 (RVLPPLFNRY…RWSAFFWSQS (101 aa)) folds into the Fe2OG dioxygenase domain. Residues His96, Asp98, and His159 each coordinate Fe cation. Arg169 serves as a coordination point for 2-oxoglutarate.

Fe(2+) serves as cofactor. The cofactor is L-ascorbate.

The sequence is that of PKHD-type hydroxylase Mnod_1077 from Methylobacterium nodulans (strain LMG 21967 / CNCM I-2342 / ORS 2060).